The chain runs to 801 residues: MLVSYKWLKELVDIDVTPAALAEKMSTTGIEVEGIEVPADGLSKLVVGHVLSCEDVPETHLHLCQVDTGDETPRQIVCGAPNVKAGIKVIVAVPGARIADNYKIKKGKIRGMESLGMICSLQELGLSDSIIPKEFSDGIQILPEEAVPGDAIFKYLDLDDHIIELSITPNRADALSMRGVAHEVAAIYGKSVSFPQKNLQESDKATSEAIEVAIASDNVLTYASRVVENVKVKPSPQWLQNLLMNAGIRPINNVVDVTNYVLLYFGQPMHAFDYDKFEDHKIVARAARQGESLVTLDGEKRDLTTEDLVITVADKPVALAGVMGGQATEIDANSQTVVLEAAVFDGKSIRKTSGRLNLRSESSSRFEKGVNYATVLEALDFAAAMLQELAEGQVLSGHVQAGQLPTEPVEVSTSLDYVNVRLGTELTFADIQRIFDQLGFGLTGDETSFTVAVPRRRWDVSIPADLVEEIARIYGYDKLPTTLPEAGGTAAELTPTQALRRKVRGLAEGLGLTEIISYALTTPEKAVEFAVAPSHLTELMWPMSVERSALRQNMVSGMLDTVAYNVARKQSNLALYEIGKIFEQEANPKEDLPNEVNHFAFAICGLVAQKDFQTQAQAVDFYHAKGNLDTLFANLNLKVQYVPTKDLANMHPGRTALILLDEQVIGFVGQVHPGTAKAYSIPETYVAELDMAALEAALPSDQTFAEITKFPAMTRDVALLLDREVSHQAIVTAIESAGVKRLTSIKLFDVYEGATIQAGKKSMAYSLTFQNPNDNLTDEEVAKYMEKITKALTEQVGAEVR.

A tRNA-binding domain is found at 39–153 (ADGLSKLVVG…EEAVPGDAIF (115 aa)). The 76-residue stretch at 406-481 (TEPVEVSTSL…RIYGYDKLPT (76 aa)) folds into the B5 domain. Asp459, Asp465, Glu468, and Glu469 together coordinate Mg(2+). Residues 708–801 (TKFPAMTRDV…LTEQVGAEVR (94 aa)) enclose the FDX-ACB domain.

The protein belongs to the phenylalanyl-tRNA synthetase beta subunit family. Type 1 subfamily. As to quaternary structure, tetramer of two alpha and two beta subunits. Mg(2+) serves as cofactor.

The protein localises to the cytoplasm. The catalysed reaction is tRNA(Phe) + L-phenylalanine + ATP = L-phenylalanyl-tRNA(Phe) + AMP + diphosphate + H(+). This chain is Phenylalanine--tRNA ligase beta subunit, found in Streptococcus pyogenes serotype M1.